A 100-amino-acid chain; its full sequence is Large ribosomal subunit protein bL21 (100 aa).

The protein belongs to the bacterial ribosomal protein bL21 family. Part of the 50S ribosomal subunit. Contacts protein L20.

This protein binds to 23S rRNA in the presence of protein L20. The polypeptide is Large ribosomal subunit protein bL21 (Ureaplasma parvum serovar 3 (strain ATCC 27815 / 27 / NCTC 11736)).